Reading from the N-terminus, the 177-residue chain is Large ribosomal subunit protein uL6 (177 aa).

This sequence belongs to the universal ribosomal protein uL6 family. As to quaternary structure, part of the 50S ribosomal subunit.

This protein binds to the 23S rRNA, and is important in its secondary structure. It is located near the subunit interface in the base of the L7/L12 stalk, and near the tRNA binding site of the peptidyltransferase center. This Actinobacillus succinogenes (strain ATCC 55618 / DSM 22257 / CCUG 43843 / 130Z) protein is Large ribosomal subunit protein uL6.